The chain runs to 394 residues: 5-azacytidine-induced protein 2 (394 aa).

The interval 1–197 (MDALVEDDIC…IELRKAKQTD (197 aa)) is homodimerization. 2 coiled-coil regions span residues 40–76 (ALVT…LIAR) and 102–196 (DRDN…AKQT). The interaction with TBK1 and IKBKE stretch occupies residues 216-257 (SDNMQHAYWELKREMSNLHLVTQVQAELLRKLKTSTAIKKAC). Phosphoserine occurs at positions 318 and 355. A disordered region spans residues 355–379 (SPPKSSETAFGETKSKTLPLPNLPP).

In terms of assembly, homodimer. Interacts with IKBKE, TBK1 and TICAM1. Interacts with TAX1BP1. Interacts with CALCOCO2. Ubiquitinated via 'Lys-48'-linked polyubiquitination by TRIM38, leading to its degradation.

The protein localises to the cytoplasm. Adapter protein which binds TBK1 and IKBKE playing a role in antiviral innate immunity. Activates serine/threonine-protein kinase TBK1 and facilitates its oligomerization. Enhances the phosphorylation of NF-kappa-B p65 subunit RELA by TBK1. Promotes TBK1-induced as well as TNF-alpha or PMA-induced activation of NF-kappa-B. Participates in IFNB promoter activation via TICAM1. In Macaca fascicularis (Crab-eating macaque), this protein is 5-azacytidine-induced protein 2 (AZI2).